An 86-amino-acid polypeptide reads, in one-letter code: Small ribosomal subunit protein uS15 (86 aa).

Belongs to the universal ribosomal protein uS15 family. Part of the 30S ribosomal subunit. Forms a bridge to the 50S subunit in the 70S ribosome, contacting the 23S rRNA.

Its function is as follows. One of the primary rRNA binding proteins, it binds directly to 16S rRNA where it helps nucleate assembly of the platform of the 30S subunit by binding and bridging several RNA helices of the 16S rRNA. In terms of biological role, forms an intersubunit bridge (bridge B4) with the 23S rRNA of the 50S subunit in the ribosome. The polypeptide is Small ribosomal subunit protein uS15 (Endomicrobium trichonymphae).